The chain runs to 241 residues: 1-(5-phosphoribosyl)-5-[(5-phosphoribosylamino)methylideneamino] imidazole-4-carboxamide isomerase (241 aa).

The active-site Proton acceptor is the D8. The Proton donor role is filled by D129.

This sequence belongs to the HisA/HisF family.

It is found in the cytoplasm. The catalysed reaction is 1-(5-phospho-beta-D-ribosyl)-5-[(5-phospho-beta-D-ribosylamino)methylideneamino]imidazole-4-carboxamide = 5-[(5-phospho-1-deoxy-D-ribulos-1-ylimino)methylamino]-1-(5-phospho-beta-D-ribosyl)imidazole-4-carboxamide. Its pathway is amino-acid biosynthesis; L-histidine biosynthesis; L-histidine from 5-phospho-alpha-D-ribose 1-diphosphate: step 4/9. In Rhodospirillum rubrum (strain ATCC 11170 / ATH 1.1.1 / DSM 467 / LMG 4362 / NCIMB 8255 / S1), this protein is 1-(5-phosphoribosyl)-5-[(5-phosphoribosylamino)methylideneamino] imidazole-4-carboxamide isomerase.